A 182-amino-acid polypeptide reads, in one-letter code: Crossover junction endodeoxyribonuclease RuvC (182 aa).

Residues Asp-7, Glu-67, and Asp-139 contribute to the active site. Residues Asp-7, Glu-67, and Asp-139 each contribute to the Mg(2+) site.

The protein belongs to the RuvC family. In terms of assembly, homodimer which binds Holliday junction (HJ) DNA. The HJ becomes 2-fold symmetrical on binding to RuvC with unstacked arms; it has a different conformation from HJ DNA in complex with RuvA. In the full resolvosome a probable DNA-RuvA(4)-RuvB(12)-RuvC(2) complex forms which resolves the HJ. It depends on Mg(2+) as a cofactor.

It localises to the cytoplasm. It catalyses the reaction Endonucleolytic cleavage at a junction such as a reciprocal single-stranded crossover between two homologous DNA duplexes (Holliday junction).. Functionally, the RuvA-RuvB-RuvC complex processes Holliday junction (HJ) DNA during genetic recombination and DNA repair. Endonuclease that resolves HJ intermediates. Cleaves cruciform DNA by making single-stranded nicks across the HJ at symmetrical positions within the homologous arms, yielding a 5'-phosphate and a 3'-hydroxyl group; requires a central core of homology in the junction. The consensus cleavage sequence is 5'-(A/T)TT(C/G)-3'. Cleavage occurs on the 3'-side of the TT dinucleotide at the point of strand exchange. HJ branch migration catalyzed by RuvA-RuvB allows RuvC to scan DNA until it finds its consensus sequence, where it cleaves and resolves the cruciform DNA. This is Crossover junction endodeoxyribonuclease RuvC from Bordetella petrii (strain ATCC BAA-461 / DSM 12804 / CCUG 43448).